The sequence spans 293 residues: tRNA pseudouridine synthase A (293 aa).

The active-site Nucleophile is the Asp60. Tyr118 is a binding site for substrate.

Belongs to the tRNA pseudouridine synthase TruA family. As to quaternary structure, homodimer.

It catalyses the reaction uridine(38/39/40) in tRNA = pseudouridine(38/39/40) in tRNA. Its function is as follows. Formation of pseudouridine at positions 38, 39 and 40 in the anticodon stem and loop of transfer RNAs. The sequence is that of tRNA pseudouridine synthase A from Rippkaea orientalis (strain PCC 8801 / RF-1) (Cyanothece sp. (strain PCC 8801)).